Consider the following 475-residue polypeptide: Squamosa promoter-binding-like protein 12 (475 aa).

The interval 49–73 (NHGSTNSSGGTFTSSSELANGSSKS) is disordered. Residues 51-73 (GSTNSSGGTFTSSSELANGSSKS) are compositionally biased toward low complexity. The SBP-type zinc-finger motif lies at 177 to 254 (SSYCQVEGCK…SDHNARRRKP (78 aa)). Zn(2+) is bound by residues Cys-180, Cys-185, Cys-202, His-205, Cys-221, Cys-224, His-228, and Cys-240. The Bipartite nuclear localization signal signature appears at 237–253 (KKSCRRRLSDHNARRRK). The tract at residues 437–475 (GGGGFWQDGDDPPPLDHASQAQAFMHPGNGSSSGYGHLH) is disordered. The span at 465 to 475 (NGSSSGYGHLH) shows a compositional bias: polar residues.

As to expression, expressed in young panicles.

The protein localises to the nucleus. Its function is as follows. Trans-acting factor that binds specifically to the consensus nucleotide sequence 5'-TNCGTACAA-3'. May be involved in panicle development. This chain is Squamosa promoter-binding-like protein 12 (SPL12), found in Oryza sativa subsp. japonica (Rice).